Reading from the N-terminus, the 533-residue chain is Calcium/calmodulin-dependent protein kinase type II (533 aa).

ATP contacts are provided by residues 18–26 and lysine 41; that span reads LGKGAFSVV. The active-site Proton acceptor is aspartate 134. Threonine 284 bears the Phosphothreonine; by autocatalysis mark. Composition is skewed to polar residues over residues 316–345 and 377–391; these read TSDS…QPTS and PPST…SQTI. Disordered regions lie at residues 316-347 and 369-400; these read TSDS…TSPA and LLNK…EKAQ.

The protein belongs to the protein kinase superfamily. CAMK Ser/Thr protein kinase family. CaMK subfamily. In terms of assembly, dodecamer. Subunits are tightly packed around a central ring-shaped scaffold with extensive contacts between the regulatory segment of one kinase and the catalytic domain of another enabling cooperative activation of a subunit by the adjacent molecule. Interacts with and phosphorylates daf-16; the interaction promotes daf-16 nuclear localization. Interacts with egl-2 and tir-1. Interacts with nsy-1. The cofactor is Mg(2+).

It localises to the cytoplasm. It is found in the cell projection. The protein resides in the axon. The protein localises to the perikaryon. The catalysed reaction is L-seryl-[protein] + ATP = O-phospho-L-seryl-[protein] + ADP + H(+). It catalyses the reaction L-threonyl-[protein] + ATP = O-phospho-L-threonyl-[protein] + ADP + H(+). With respect to regulation, ca(2+)/calmodulin binding removes an autoinhibitory regulatory segment located C-terminal to the kinase domain. This releases the catalytic activity of the enzyme and makes accessible a regulatory residue Thr-284. Phosphorylation of Thr-284 by another kinase domain within the oligomeric holoenzyme keeps CaMKII active in the absence of Ca(2+)/calmodulin by preventing the rebinding of the regulatory segment to the kinase domain and by increasing the affinity of calmodulin for the enzyme. Can respond to high-frequency Ca(2+) pulses to become Ca(2+) independent. In terms of biological role, role in locomotion and neuronal cell fate specification. Required for the regulation of synaptic density, egg laying, defecation, and meiotic maturation. Required for viability under chronic osmotic stress in which it acts downstream of osr-1. Regulates the synaptic trafficking of glr-1. Bidirectional modulator of neurotransmitter release with negative modulatory effects mainly mediated via slo-1 activation. May suppress the functional response to an internal pacemaker, perhaps by modulating the activity of the IP3 receptor. The sequence is that of Calcium/calmodulin-dependent protein kinase type II from Caenorhabditis briggsae.